A 560-amino-acid polypeptide reads, in one-letter code: Protein NRT1/ PTR FAMILY 2.5 (560 aa).

A disordered region spans residues 1 to 20 (MADSKSGDTEVAHRSSDPSE). Transmembrane regions (helical) follow at residues 34–54 (TLLG…VFLI), 77–97 (MLPV…PVIS), 101–121 (FISL…YLMP), 141–161 (ILYV…FTLA), 177–197 (FFNW…TAIV), 207–227 (LGFG…IAGV), 323–343 (AILR…PVAV), 372–392 (VIVL…IYPM), 404–424 (LQQV…SAVV), 441–461 (VLWL…HFPA), 480–500 (SLTS…IDVI), and 520–540 (YWVV…CSWF).

The protein belongs to the major facilitator superfamily. Proton-dependent oligopeptide transporter (POT/PTR) (TC 2.A.17) family. As to expression, expressed in the root epidermis or cortex.

The protein resides in the membrane. Transporter involved in a passive nitrate efflux. The sequence is that of Protein NRT1/ PTR FAMILY 2.5 (NPF2.5) from Arabidopsis thaliana (Mouse-ear cress).